Reading from the N-terminus, the 331-residue chain is Geranylgeranyl transferase type-2 subunit beta (331 aa).

G2 carries the post-translational modification N-acetylglycine. At T3 the chain carries Phosphothreonine. PFTB repeat units follow at residues 20 to 61, 68 to 109, 116 to 157, 164 to 205, 212 to 253, and 260 to 302; these read LEKH…DLMG, REEI…TLYD, INKV…ALLG, VEKA…AITS, SDLL…KIIG, and REKL…SLLG. A geranylgeranyl diphosphate-binding site is contributed by 190 to 192; that stretch reads HAG. D238 and C240 together coordinate Zn(2+). 241-244 is a binding site for geranylgeranyl diphosphate; the sequence is YSWW. H290 is a binding site for Zn(2+).

Belongs to the protein prenyltransferase subunit beta family. In terms of assembly, heterotrimer composed of RABGGTA, RABGGTB and CHM; within this trimer, RABGGTA and RABGGTB form the catalytic component B, while CHM (component A) mediates peptide substrate binding. The Rab GGTase dimer (RGGT) interacts with CHM (component A) prior to Rab protein binding; the association is stabilized by geranylgeranyl pyrophosphate (GGpp). The CHM:RGGT:Rab complex is destabilized by GGpp. Interaction of RABGGTB with prenylated PTP4A2 precludes its association with RABGGTA and inhibits enzyme activity. Interacts with CHODL. Interacts with non-phosphorylated form of RAB8A; phosphorylation of RAB8A at 'Thr-72' disrupts this interaction. Requires Zn(2+) as cofactor.

The catalysed reaction is geranylgeranyl diphosphate + L-cysteinyl-[protein] = S-geranylgeranyl-L-cysteinyl-[protein] + diphosphate. Its activity is regulated as follows. The enzymatic reaction requires the aid of a Rab escort protein (also called component A). Functionally, catalyzes the transfer of a geranylgeranyl moiety from geranylgeranyl diphosphate to both cysteines of Rab proteins with the C-terminal sequence -XXCC, -XCXC and -CCXX, such as RAB1A, RAB3A, RAB5A and RAB7A. In Bos taurus (Bovine), this protein is Geranylgeranyl transferase type-2 subunit beta (RABGGTB).